A 498-amino-acid polypeptide reads, in one-letter code: MPEEYLNAQKMEKLERIKSRGINPYPATFHPSHTSVQAVALLAELEKQENPPKEILRIAGRIMTLRDMGKISFMDIRDGSGKIQVFCRQNDLDEASIELLKDLDLGDFIGAEGSLMRTRTGEPSLAATKISLLSKSLLPLPEKWHGLQDVEKRYRQRYLDLISNADARQTFLTRSQVISAIRSFMSSKGFLEVETPVLQPEAGGALARPFITHHQALDCDFYMRIALELHLKRLIVGGFDRVYEIGRIFRNEGVSTRHNPEFTMMESYQAYADYKDVMDFLEEMVSSVVKEISGGYTVPFGDTTLDFTPPWPRLSMRDAVKQYAGIDFFDFPTKEALAAEMIRRKLKVDPAKDWGKLVDELVGEFVEPRLIQPTFLTDHPVAMSPLAKQKPEDPRLTERFEAICANMEIANAFSELNDPVEQRARFKEQLEKRNQLRTEESESIDEDFLAALAYGMPPTGGLGVGIDRLVMLLTNHDSIREVILFPALKDREDKGEQE.

Glu-401 and Glu-408 together coordinate Mg(2+).

Belongs to the class-II aminoacyl-tRNA synthetase family. As to quaternary structure, homodimer. Mg(2+) is required as a cofactor.

The protein localises to the cytoplasm. It carries out the reaction tRNA(Lys) + L-lysine + ATP = L-lysyl-tRNA(Lys) + AMP + diphosphate. This is Lysine--tRNA ligase from Dehalococcoides mccartyi (strain ATCC BAA-2266 / KCTC 15142 / 195) (Dehalococcoides ethenogenes (strain 195)).